Consider the following 315-residue polypeptide: Gamma-hemolysin component C (315 aa).

Positions 1-29 (MLKNKILATTLSVSLLAPLANPLLENAKA) are cleaved as a signal peptide.

It belongs to the aerolysin family. In terms of assembly, toxicity requires sequential binding and synergistic association of a class S and a class F component which form heterooligomeric complexes. HlgC (class S) associates with HlgB (class F) thus forming an CB toxin.

In terms of biological role, toxin that seems to act by forming pores in the membrane of the cell. Has a hemolytic and a leucotoxic activity. The polypeptide is Gamma-hemolysin component C (hlgC) (Staphylococcus aureus (strain Mu50 / ATCC 700699)).